The following is a 303-amino-acid chain: Methionyl-tRNA formyltransferase (303 aa).

Residue 110–113 (SLLP) coordinates (6S)-5,6,7,8-tetrahydrofolate.

Belongs to the Fmt family.

The enzyme catalyses L-methionyl-tRNA(fMet) + (6R)-10-formyltetrahydrofolate = N-formyl-L-methionyl-tRNA(fMet) + (6S)-5,6,7,8-tetrahydrofolate + H(+). Attaches a formyl group to the free amino group of methionyl-tRNA(fMet). The formyl group appears to play a dual role in the initiator identity of N-formylmethionyl-tRNA by promoting its recognition by IF2 and preventing the misappropriation of this tRNA by the elongation apparatus. This Ehrlichia ruminantium (strain Gardel) protein is Methionyl-tRNA formyltransferase.